Here is a 523-residue protein sequence, read N- to C-terminus: MDFLLLGLCLHWLLRRPSGVVLCLLGACFQMLPAAPSGCPGQCRCEGRLLYCEALNLTEAPHNLSGLLGLSLRYNSLSELRAGQFTGLMQLTWLYLDHNHICSVQGDAFQKLRRVKELTLSSNQITELANTTFRPMPNLRSVDLSYNKLQALAPDLFHGLRKLTTLHMRANAIQFVPVRIFQDCRSLKFLDIGYNQLKSLARNSFAGLFKLTELHLEHNDLIKVNFAHFPRLISLNSLCLRRNKVAIVVSSLDWVWNLEKMDLSGNEIEYMEPHVFETVPYLQSLQLDSNRLTYIEPRILNSWKSLTSITLAGNLWDCGRNVCALASWLSNFQGRYDANLQCASPEYAQGEDVLDAVYAFHLCEDGAEPTSGHLLSAAVTNRSDLAPPESSATTLVDGGEGLHDSTLEPITVAIPGGEHAENAVQIHKVVTGTMALIFSFLIVVLVLYVSWKCFPASLRQLRQCFVTQRRKQKQKQTMHQMAAMSAQEYYVDYKPNHIEGALVIINEYGSCTCHQQPARECEV.

The signal sequence occupies residues 1 to 34; that stretch reads MDFLLLGLCLHWLLRRPSGVVLCLLGACFQMLPA. The LRRNT domain maps to 35-63; the sequence is APSGCPGQCRCEGRLLYCEALNLTEAPHN. Topologically, residues 35 to 428 are extracellular; it reads APSGCPGQCR…HAENAVQIHK (394 aa). 2 N-linked (GlcNAc...) asparagine glycosylation sites follow: N56 and N63. 10 LRR repeats span residues 64–87, 89–111, 112–135, 136–159, 161–183, 184–207, 209–231, 233–255, 256–278, and 280–302; these read LSGL…QFTG, MQLT…AFQK, LRRV…TFRP, MPNL…LFHG, RKLT…IFQD, CRSL…SFAG, FKLT…HFPR, ISLN…LDWV, WNLE…VFET, and PYLQ…ILNS. A glycan (N-linked (GlcNAc...) asparagine) is linked at N130. One can recognise an LRRCT domain in the interval 314–365; the sequence is NLWDCGRNVCALASWLSNFQGRYDANLQCASPEYAQGEDVLDAVYAFHLCED. A glycan (N-linked (GlcNAc...) asparagine) is linked at N381. The helical transmembrane segment at 429–449 threads the bilayer; it reads VVTGTMALIFSFLIVVLVLYV. Residues 450-523 are Cytoplasmic-facing; it reads SWKCFPASLR…HQQPARECEV (74 aa). The May be involved in DLG4-binding signature appears at 520 to 523; the sequence is ECEV.

This sequence belongs to the LRRTM family. In terms of assembly, interacts with DLG4.

Its subcellular location is the cell membrane. It localises to the postsynaptic cell membrane. Functionally, exhibits strong synaptogenic activity, restricted to excitatory presynaptic differentiation, acting at both pre- and postsynaptic level. The chain is Leucine-rich repeat transmembrane neuronal protein 1 (Lrrtm1) from Rattus norvegicus (Rat).